The following is a 100-amino-acid chain: NAD(P)H-quinone oxidoreductase subunit 4L, chloroplastic (100 aa).

The next 3 helical transmembrane spans lie at Met1 to Val21, Met31 to Phe51, and Ile63 to Ile83.

It belongs to the complex I subunit 4L family. As to quaternary structure, NDH is composed of at least 16 different subunits, 5 of which are encoded in the nucleus.

The protein localises to the plastid. It is found in the chloroplast thylakoid membrane. The enzyme catalyses a plastoquinone + NADH + (n+1) H(+)(in) = a plastoquinol + NAD(+) + n H(+)(out). It carries out the reaction a plastoquinone + NADPH + (n+1) H(+)(in) = a plastoquinol + NADP(+) + n H(+)(out). Its function is as follows. NDH shuttles electrons from NAD(P)H:plastoquinone, via FMN and iron-sulfur (Fe-S) centers, to quinones in the photosynthetic chain and possibly in a chloroplast respiratory chain. The immediate electron acceptor for the enzyme in this species is believed to be plastoquinone. Couples the redox reaction to proton translocation, and thus conserves the redox energy in a proton gradient. This Cryptomeria japonica (Japanese cedar) protein is NAD(P)H-quinone oxidoreductase subunit 4L, chloroplastic.